Consider the following 950-residue polypeptide: A disintegrin and metalloproteinase with thrombospondin motifs 15 (950 aa).

Residues 1–17 (MLLLGILTLAFAGRTAG) form the signal peptide. A propeptide spanning residues 18–212 (GSEPEREVVV…SRRRSGRAKR (195 aa)) is cleaved from the precursor. An N-linked (GlcNAc...) asparagine glycan is attached at N141. A disordered region spans residues 151–172 (SQGAHLLQRRGVPGGPSGDPTS). The short motif at 172-179 (SRCGVASG) is the Cysteine switch element. C174 is a Zn(2+) binding site. Positions 218–427 (RYVETLVVAD…GHGDCLLDQP (210 aa)) constitute a Peptidase M12B domain. 11 disulfides stabilise this stretch: C293-C345, C322-C327, C339-C422, C377-C406, C448-C470, C459-C480, C465-C499, C493-C504, C528-C565, C532-C570, and C543-C555. H361 serves as a coordination point for Zn(2+). Residue E362 is part of the active site. Residues H365 and H371 each contribute to the Zn(2+) site. Residues 428–515 (SKPISLPEDL…ERHNLNKHRV (88 aa)) form the Disintegrin domain. One can recognise a TSP type-1 1 domain in the interval 516-571 (DGSWAKWDPYGPCSRTCGGGVQLARRQCTNPTPANGGKYCEGVRVKYRSCNLEPCP). Residues N591, N623, and N679 are each glycosylated (N-linked (GlcNAc...) asparagine). Positions 701–838 (AIPAGASSID…SNQVEQPDDR (138 aa)) are spacer. The interval 798 to 822 (FYLPKEPREDKSSHPKDPRGPSVLH) is disordered. Residues 802 to 816 (KEPREDKSSHPKDPR) are compositionally biased toward basic and acidic residues. TSP type-1 domains follow at residues 839 to 895 (PPAR…EPCP) and 896 to 949 (TWEL…VLRP).

Zn(2+) serves as cofactor. Post-translationally, the precursor is cleaved by a furin endopeptidase. Glycosylated. Can be O-fucosylated by POFUT2 on a serine or a threonine residue found within the consensus sequence C1-X(2)-(S/T)-C2-G of the TSP type-1 repeat domains where C1 and C2 are the first and second cysteine residue of the repeat, respectively. Fucosylated repeats can then be further glycosylated by the addition of a beta-1,3-glucose residue by the glucosyltransferase, B3GALTL. Fucosylation mediates the efficient secretion of ADAMTS family members. Can be C-glycosylated with one or two mannose molecules on tryptophan residues within the consensus sequence W-X-X-W of the TPRs. Also N-glycosylated. These other glycosylations can also facilitate secretion. Expressed in fetal liver and kidney, but not in any of the adult tissues examined.

It localises to the secreted. Its subcellular location is the extracellular space. It is found in the extracellular matrix. The protein resides in the cell surface. Its function is as follows. Metalloprotease which has proteolytic activity against the proteoglycan VCAN, cleaving it at the 'Glu-1428-|-1429-Ala' site. Cleaves VCAN in the pericellular matrix surrounding myoblasts, facilitating myoblast contact and fusion which is required for skeletal muscle development and regeneration. The sequence is that of A disintegrin and metalloproteinase with thrombospondin motifs 15 (ADAMTS15) from Homo sapiens (Human).